Reading from the N-terminus, the 328-residue chain is tRNA U34 carboxymethyltransferase (328 aa).

Residues Lys-91, Trp-105, Lys-110, Gly-130, 152–154 (DPS), Met-196, Tyr-200, and Arg-315 each bind carboxy-S-adenosyl-L-methionine.

Belongs to the class I-like SAM-binding methyltransferase superfamily. CmoB family. Homotetramer.

The catalysed reaction is carboxy-S-adenosyl-L-methionine + 5-hydroxyuridine(34) in tRNA = 5-carboxymethoxyuridine(34) in tRNA + S-adenosyl-L-homocysteine + H(+). In terms of biological role, catalyzes carboxymethyl transfer from carboxy-S-adenosyl-L-methionine (Cx-SAM) to 5-hydroxyuridine (ho5U) to form 5-carboxymethoxyuridine (cmo5U) at position 34 in tRNAs. This Psychromonas ingrahamii (strain DSM 17664 / CCUG 51855 / 37) protein is tRNA U34 carboxymethyltransferase.